The primary structure comprises 345 residues: G-protein coupled receptor family C group 5 member D (345 aa).

At 1 to 27 the chain is on the extracellular side; it reads MYKDCIESTGDYFLLCDAEGPWGIILE. Residues 28 to 48 form a helical membrane-spanning segment; that stretch reads SLAILGIVVTILLLLAFLFLM. At 49–63 the chain is on the cytoplasmic side; that stretch reads RKIQDCSQWNVLPTQ. The helical transmembrane segment at 64–84 threads the bilayer; the sequence is LLFLLSVLGLFGLAFAFIIEL. At 85–93 the chain is on the extracellular side; the sequence is NQQTAPVRY. The chain crosses the membrane as a helical span at residues 94–114; it reads FLFGVLFALCFSCLLAHASNL. Topologically, residues 115-123 are cytoplasmic; sequence VKLVRGCVS. Residues 124–144 traverse the membrane as a helical segment; that stretch reads FSWTTILCIAIGCSLLQIIIA. The Extracellular portion of the chain corresponds to 145–167; it reads TEYVTLIMTRGMMFVNMTPCQLN. The helical transmembrane segment at 168 to 188 threads the bilayer; that stretch reads VDFVVLLVYVLFLMALTFFVS. Residues 189–204 are Cytoplasmic-facing; the sequence is KATFCGPCENWKQHGR. The helical transmembrane segment at 205–225 threads the bilayer; it reads LIFITVLFSIIIWVVWISMLL. Residues 226–239 lie on the Extracellular side of the membrane; the sequence is RGNPQFQRQPQWDD. A helical membrane pass occupies residues 240–260; sequence PVVCIALVTNAWVFLLLYIVP. The Cytoplasmic segment spans residues 261-345; it reads ELCILYRSCR…LSPQQDAGGV (85 aa).

The protein belongs to the G-protein coupled receptor 3 family. As to quaternary structure, homodimer. Widely expressed in the peripheral system. Expression pattern is high in pancreas, medium in kidney, small intestine, spleen and testis, low in lung, colon, leukocyte, prostate and thymus and not detectable in brain, heart, liver, placenta, skeletal muscle and ovary.

Its subcellular location is the cell membrane. In terms of biological role, G-protein coupled receptor involved in hard keratin expression and likely plays a role in the development of hair and nails. This chain is G-protein coupled receptor family C group 5 member D (GPRC5D), found in Homo sapiens (Human).